Here is a 114-residue protein sequence, read N- to C-terminus: Pro-FMRFamide-related neuropeptide FF (114 aa).

Positions Met-1–Ala-21 are cleaved as a signal peptide. The propeptide occupies Glu-22–Pro-69. A disordered region spans residues Glu-29–Arg-51. Position 82 is a phenylalanine amide (Phe-82). A propeptide spanning residues Asn-85–Arg-100 is cleaved from the precursor. Phe-111 bears the Phenylalanine amide mark.

The protein belongs to the FARP (FMRFamide related peptide) family.

Its subcellular location is the secreted. Its function is as follows. Morphine modulating peptides. Have wide-ranging physiologic effects, including the modulation of morphine-induced analgesia, elevation of arterial blood pressure, and increased somatostatin secretion from the pancreas. Neuropeptide FF and SF potentiate and sensitize ASIC2 and ASIC3 channels. The chain is Pro-FMRFamide-related neuropeptide FF (Npff) from Rattus norvegicus (Rat).